The chain runs to 603 residues: NADH-quinone oxidoreductase subunit C/D (603 aa).

The interval 1-193 (MVNNMTDLTA…DPFTLTKQKE (193 aa)) is NADH dehydrogenase I subunit C. The NADH dehydrogenase I subunit D stretch occupies residues 217–603 (DFMFLNLGPN…IDFVMSDVDR (387 aa)).

It in the N-terminal section; belongs to the complex I 30 kDa subunit family. In the C-terminal section; belongs to the complex I 49 kDa subunit family. NDH-1 is composed of 13 different subunits. Subunits NuoB, CD, E, F, and G constitute the peripheral sector of the complex.

Its subcellular location is the cell inner membrane. It carries out the reaction a quinone + NADH + 5 H(+)(in) = a quinol + NAD(+) + 4 H(+)(out). In terms of biological role, NDH-1 shuttles electrons from NADH, via FMN and iron-sulfur (Fe-S) centers, to quinones in the respiratory chain. The immediate electron acceptor for the enzyme in this species is believed to be ubiquinone. Couples the redox reaction to proton translocation (for every two electrons transferred, four hydrogen ions are translocated across the cytoplasmic membrane), and thus conserves the redox energy in a proton gradient. This Cronobacter sakazakii (strain ATCC BAA-894) (Enterobacter sakazakii) protein is NADH-quinone oxidoreductase subunit C/D.